The chain runs to 375 residues: Cinnamyl alcohol dehydrogenase 3 (375 aa).

Position 44 (Cys-44) interacts with Zn(2+). Ser-46 serves as a coordination point for NADP(+). Zn(2+) is bound by residues His-66, Glu-67, Cys-97, Cys-100, Cys-103, Cys-111, and Cys-160. NADP(+) is bound by residues Thr-164, 186–191 (GLGGLG), 209–214 (SRSSEK), Thr-249, Gly-273, and 296–298 (SQI).

The protein belongs to the zinc-containing alcohol dehydrogenase family. Homodimer. The cofactor is Zn(2+). As to expression, expressed in the root tips. Expressed in the apical meristematic regions, leaf veins and at the base of the trichomes. Expressed at the base of the stems. Expressed in the abscission zones of newly formed siliques.

The catalysed reaction is (E)-cinnamyl alcohol + NADP(+) = (E)-cinnamaldehyde + NADPH + H(+). The enzyme catalyses (E)-coniferol + NADP(+) = (E)-coniferaldehyde + NADPH + H(+). It carries out the reaction (E)-sinapyl alcohol + NADP(+) = (E)-sinapaldehyde + NADPH + H(+). It catalyses the reaction (E)-4-coumaroyl alcohol + NADP(+) = (E)-4-coumaraldehyde + NADPH + H(+). The catalysed reaction is (E)-caffeyl alcohol + NADP(+) = (E)-caffeyl aldehyde + NADPH + H(+). Its pathway is aromatic compound metabolism; phenylpropanoid biosynthesis. Functionally, involved in lignin biosynthesis. Catalyzes the final step specific for the production of lignin monomers. Catalyzes the NADPH-dependent reduction of coniferaldehyde, 5-hydroxyconiferaldehyde, sinapaldehyde, 4-coumaraldehyde and caffeyl aldehyde to their respective alcohols. In Arabidopsis thaliana (Mouse-ear cress), this protein is Cinnamyl alcohol dehydrogenase 3.